A 295-amino-acid polypeptide reads, in one-letter code: Nucleotide-binding protein SSU98_0619 (295 aa).

Residue 12-19 (GMSGAGKT) participates in ATP binding. 62 to 65 (DMRS) contributes to the GTP binding site.

The protein belongs to the RapZ-like family.

In terms of biological role, displays ATPase and GTPase activities. The protein is Nucleotide-binding protein SSU98_0619 of Streptococcus suis (strain 98HAH33).